We begin with the raw amino-acid sequence, 128 residues long: Large ribosomal subunit protein bL21 (128 aa).

The interval G104–E128 is disordered. Over residues E119–E128 the composition is skewed to low complexity.

Belongs to the bacterial ribosomal protein bL21 family. As to quaternary structure, part of the 50S ribosomal subunit. Contacts protein L20.

This protein binds to 23S rRNA in the presence of protein L20. The sequence is that of Large ribosomal subunit protein bL21 from Rhodopseudomonas palustris (strain HaA2).